The primary structure comprises 86 residues: MSNQFKILLFAKVKEVIGKDSIFIDLPLDESTSFNLIRKLKHIYPQISSTLEVSLLAVNQEYISRDQDIKINSNDEIAIIPPVSGG.

Gly86 is modified (1-thioglycine; alternate). Glycyl adenylate; alternate is present on Gly86.

The protein belongs to the MoaD family. MOCS2A subfamily. As to quaternary structure, heterotetramer; composed of 2 small (mocs2s) and 2 large (mocs2l) subunits. C-terminal thiocarboxylation occurs in 2 steps, it is first acyl-adenylated (-COAMP) via the hesA/moeB/thiF part of mocs3, then thiocarboxylated (-COSH) via the rhodanese domain of mocs3.

It localises to the cytoplasm. It functions in the pathway cofactor biosynthesis; molybdopterin biosynthesis. In terms of biological role, acts as a sulfur carrier required for molybdopterin biosynthesis. Component of the molybdopterin synthase complex that catalyzes the conversion of precursor Z into molybdopterin by mediating the incorporation of 2 sulfur atoms into precursor Z to generate a dithiolene group. In the complex, serves as sulfur donor by being thiocarboxylated (-COSH) at its C-terminus by mocs3. After interaction with mocs2l, the sulfur is then transferred to precursor Z to form molybdopterin. This is Molybdopterin synthase sulfur carrier subunit (mocs2s) from Dictyostelium discoideum (Social amoeba).